The primary structure comprises 723 residues: MGKKKSDESAATTKVKPSGKDASKDSKKEKLSVSAMLAGMDQKDDKPKKGSSSRTKAAPKSTSYTDGIDLPPSDEEDDGESDEEERQKEARRKLKSEQRHLEISVTDKEQKKREAKERLALQAAESAKREAMKDDHDAFTVVIGSKTSVLEGDDMADANVKDITIESFSVSARGKELLKNASVRISHGKRYGLIGPNGMGKSTLLKLLAWRKIPVPKNIDVLLVEQEVVGDEKSALNAVVSANEELVKLREEAEALQKSSSGADGENVDGEDDDDTGEKLAELYDRLQILGSDAAEAQASKILAGLGFTKDMQVRATQSFSGGWRMRISLARALFVQPTLLLLDEPTNHLDLRAVLWLEEYLCRWKKTLVVVSHDRDFLNTVCTEIIHLHDQNLHFYRGNFDGFESGYEQRRKEMNKKFDVYDKQMKAAKRTGNRGQQEKVKDRAKFTAAKEASKSKSKGKTVDEEGPAPEAPRKWRDYSVVFHFPEPTELTPPLLQLIEVSFSYPNRPDFRLSNVDVGIDMGTRVAIVGPNGAGKSTLLNLLAGDLVPTEGEMRRSQKLRIGRYSQHFVDLLTMGETPVQYLLRLHPDQEGFSKQEAVRAKLGKFGLPSHNHLSPIAKLSGGQKARVVFTSISMSKPHILLLDEPTNHLDMQSIDALADALDEFTGGVVLVSHDSRLISRVCAEEEKSQIWVVEDGTVNFFPGTFEEYKEDLQREIKAEVDE.

Residues 1-117 are disordered; sequence MGKKKSDESA…KEQKKREAKE (117 aa). Residues 18–31 show a composition bias toward basic and acidic residues; it reads SGKDASKDSKKEKL. Over residues 50–65 the composition is skewed to polar residues; the sequence is GSSSRTKAAPKSTSYT. Acidic residues predominate over residues 72–84; that stretch reads PSDEEDDGESDEE. The span at 95 to 117 shows a compositional bias: basic and acidic residues; the sequence is KSEQRHLEISVTDKEQKKREAKE. One can recognise an ABC transporter 1 domain in the interval 163 to 423; that stretch reads ITIESFSVSA…EMNKKFDVYD (261 aa). 195-202 is a binding site for ATP; that stretch reads GPNGMGKS. 2 disordered regions span residues 256–275 and 427–472; these read LQKSSSGADGENVDGEDDDD and KAAK…APEA. Residues 266-275 are compositionally biased toward acidic residues; the sequence is ENVDGEDDDD. The segment covering 437–446 has biased composition (basic and acidic residues); the sequence is QQEKVKDRAK. In terms of domain architecture, ABC transporter 2 spans 496 to 721; that stretch reads LQLIEVSFSY…DLQREIKAEV (226 aa). 530–537 is a binding site for ATP; that stretch reads GPNGAGKS.

This sequence belongs to the ABC transporter superfamily. ABCF family. EF3 (TC 3.A.1.121) subfamily.

This chain is ABC transporter F family member 4 (ABCF4), found in Arabidopsis thaliana (Mouse-ear cress).